The primary structure comprises 73 residues: Translation initiation factor IF-1 (73 aa).

The 73-residue stretch at 1 to 73 folds into the S1-like domain; the sequence is MAKKEDTLVL…TKARVVYRHR (73 aa).

It belongs to the IF-1 family. Component of the 30S ribosomal translation pre-initiation complex which assembles on the 30S ribosome in the order IF-2 and IF-3, IF-1 and N-formylmethionyl-tRNA(fMet); mRNA recruitment can occur at any time during PIC assembly.

It localises to the cytoplasm. Functionally, one of the essential components for the initiation of protein synthesis. Stabilizes the binding of IF-2 and IF-3 on the 30S subunit to which N-formylmethionyl-tRNA(fMet) subsequently binds. Helps modulate mRNA selection, yielding the 30S pre-initiation complex (PIC). Upon addition of the 50S ribosomal subunit IF-1, IF-2 and IF-3 are released leaving the mature 70S translation initiation complex. The protein is Translation initiation factor IF-1 of Chlamydia pneumoniae (Chlamydophila pneumoniae).